The primary structure comprises 68 residues: Large ribosomal subunit protein bL35 (68 aa).

The protein belongs to the bacterial ribosomal protein bL35 family.

In Rickettsia conorii (strain ATCC VR-613 / Malish 7), this protein is Large ribosomal subunit protein bL35.